Reading from the N-terminus, the 59-residue chain is Potassium channel toxin alpha-KTx 1.2 (59 aa).

An N-terminal signal peptide occupies residues 1 to 22; it reads MKILSVLLLALIICSIIDWSEG. Position 23 is a pyrrolidone carboxylic acid (Q23). Disulfide bonds link C29–C50, C35–C55, and C39–C57. The interval 48-55 is interaction with Ca(2+)-activated K(+) channels; the sequence is GKCMNKKC.

It belongs to the short scorpion toxin superfamily. Potassium channel inhibitor family. Alpha-KTx 01 subfamily. Expressed by the venom gland.

The protein resides in the secreted. Functionally, blocks calcium-activated potassium channels (Kd=43 nM on KCa1.1/KCNMA1). Has a potent presynaptic facilitatory action, with less effect on direct muscle stimulation. This is Potassium channel toxin alpha-KTx 1.2 from Leiurus hebraeus (Hebrew deathstalker scorpion).